The following is a 330-amino-acid chain: DNA primase small subunit PriS (330 aa).

Catalysis depends on residues Asp-101 and Asp-103. Zn(2+) is bound by residues Cys-116, Cys-119, Cys-128, and Asp-131. The active site involves Asp-235.

It belongs to the eukaryotic-type primase small subunit family. In terms of assembly, heterodimer of a small subunit (PriS) and a large subunit (PriL). Mg(2+) is required as a cofactor. Mn(2+) serves as cofactor.

In terms of biological role, catalytic subunit of DNA primase, an RNA polymerase that catalyzes the synthesis of short RNA molecules used as primers for DNA polymerase during DNA replication. The small subunit contains the primase catalytic core and has DNA synthesis activity on its own. Binding to the large subunit stabilizes and modulates the activity, increasing the rate of DNA synthesis while decreasing the length of the DNA fragments, and conferring RNA synthesis capability. The DNA polymerase activity may enable DNA primase to also catalyze primer extension after primer synthesis. May also play a role in DNA repair. Possesses a template-independent 3'-terminal nucleotidyl transferase activity. This Saccharolobus solfataricus (strain ATCC 35092 / DSM 1617 / JCM 11322 / P2) (Sulfolobus solfataricus) protein is DNA primase small subunit PriS.